Here is a 220-residue protein sequence, read N- to C-terminus: Uracil-DNA glycosylase (220 aa).

Asp-60 (proton acceptor) is an active-site residue.

It belongs to the uracil-DNA glycosylase (UDG) superfamily. UNG family.

It localises to the cytoplasm. The catalysed reaction is Hydrolyzes single-stranded DNA or mismatched double-stranded DNA and polynucleotides, releasing free uracil.. Its function is as follows. Excises uracil residues from the DNA which can arise as a result of misincorporation of dUMP residues by DNA polymerase or due to deamination of cytosine. This chain is Uracil-DNA glycosylase, found in Francisella tularensis subsp. novicida (strain U112).